Reading from the N-terminus, the 200-residue chain is Proteasome subunit beta 2 (200 aa).

A propeptide spans 1–7 (METKKTG) (removed in mature form; by autocatalysis). Thr-8 functions as the Nucleophile in the catalytic mechanism.

This sequence belongs to the peptidase T1B family. In terms of assembly, the 20S proteasome core is composed of 14 alpha and 14 beta subunits that assemble into four stacked heptameric rings, resulting in a barrel-shaped structure. The two inner rings, each composed of seven catalytic beta subunits, are sandwiched by two outer rings, each composed of seven alpha subunits. The catalytic chamber with the active sites is on the inside of the barrel. Has a gated structure, the ends of the cylinder being occluded by the N-termini of the alpha-subunits. Is capped at one or both ends by the proteasome regulatory ATPase, PAN.

The protein localises to the cytoplasm. The enzyme catalyses Cleavage of peptide bonds with very broad specificity.. With respect to regulation, the formation of the proteasomal ATPase PAN-20S proteasome complex, via the docking of the C-termini of PAN into the intersubunit pockets in the alpha-rings, triggers opening of the gate for substrate entry. Interconversion between the open-gate and close-gate conformations leads to a dynamic regulation of the 20S proteasome proteolysis activity. Its function is as follows. Component of the proteasome core, a large protease complex with broad specificity involved in protein degradation. In Thermococcus onnurineus (strain NA1), this protein is Proteasome subunit beta 2.